Consider the following 507-residue polypeptide: Carboxypeptidase sxa2 (507 aa).

The N-terminal stretch at 1–22 (MLSLFLKSLFAIIIIELTIIHA) is a signal peptide. N-linked (GlcNAc...) asparagine glycosylation is found at Asn38 and Asn45. Residues 41-64 (SASSNQTVQPRQHAAPSSDRIKSL) are disordered. Ser200 is an active-site residue. N-linked (GlcNAc...) asparagine glycosylation is found at Asn259, Asn260, and Asn300. The active site involves Asp434. Asn448 carries an N-linked (GlcNAc...) asparagine glycan. His487 is an active-site residue.

This sequence belongs to the peptidase S10 family.

Its subcellular location is the secreted. Its function is as follows. Involved in degradation or processing of the mating pheromones. Its loss causes a persistent response to the pheromones. It may be required for stabilization of enzymes that are essential for zygote formation. May degrade the mating pheromone P-factor. This is Carboxypeptidase sxa2 (sxa2) from Schizosaccharomyces pombe (strain 972 / ATCC 24843) (Fission yeast).